The following is a 63-amino-acid chain: uncharacterized protein (63 aa).

The N-terminal stretch at 1–21 (MYLSLLLILLAWTLWLGNSLA) is a signal peptide.

This is an uncharacterized protein from Haemophilus influenzae (strain ATCC 51907 / DSM 11121 / KW20 / Rd).